A 779-amino-acid polypeptide reads, in one-letter code: Protocadherin beta-8 (779 aa).

A signal peptide spans Met-1–Ser-28. Residues Glu-29–Leu-690 lie on the Extracellular side of the membrane. 5 consecutive Cadherin domains span residues Leu-75–Phe-133, Pro-134–Phe-242, Leu-243–Leu-346, Thr-347–Phe-450, and Thr-451–Val-560. Cys-96 and Cys-102 form a disulfide bridge. N-linked (GlcNAc...) asparagine glycosylation occurs at Asn-169. Ser-223 is a glycosylation site (O-linked (Man) serine). Thr-225 and Thr-227 each carry an O-linked (Man) threonine glycan. Asn-417 carries an N-linked (GlcNAc...) asparagine glycan. N-linked (GlcNAc...) asparagine glycosylation is present at Asn-566. A Cadherin 6 domain is found at Leu-575–Val-675. Residues Val-691–Val-711 form a helical membrane-spanning segment. Residues Lys-712–Ser-779 lie on the Cytoplasmic side of the membrane.

Forms homodimers in trans (molecules expressed by two different cells). Forms promiscuous heterodimers in cis (at the plasma membrane of the same cell) with other protocadherins.

Its subcellular location is the cell membrane. Functionally, calcium-dependent cell-adhesion protein involved in cells self-recognition and non-self discrimination. Thereby, it is involved in the establishment and maintenance of specific neuronal connections in the brain. The protein is Protocadherin beta-8 of Mus musculus (Mouse).